Consider the following 130-residue polypeptide: Small ribosomal subunit protein uS9 (130 aa).

Belongs to the universal ribosomal protein uS9 family.

The sequence is that of Small ribosomal subunit protein uS9 from Burkholderia pseudomallei (strain K96243).